Reading from the N-terminus, the 715-residue chain is MQLERAAFSDPFSFLGPQYQSQTTALRVWLPGATSVKVRLSGHVEYQLLSDPRHSGIFVLNESIDMTEVHYELIIDWSGTEQILDDPYQYHDISPTDAQVHTPKEMYNHLGAHLFNVVRDGKQIQGVRYLVFAPNASSASVIGDFNQWDGRRHIMQRIDNGLWALFIPEHAVGTKYKFELKGPNGESLPHKMDPYGAHNEQYPSFASVVYDQTSYQWNDAKWQQRPVTEKQKEALSFYELHAGSWKRNENGDFLTYRELAEQLIPYILDMGYTHIELMPVSEHPFYGSWGYQPIGLFSPTSRFGTPDDFKYFVDQCHQVGIGVVLDWVPAHFPSDSHGLANFDGTSLFNDPDPRRGWHNDWQSFIYNYDQPHVREFLVSNALYWFEHFHIDGLRVDAVASMLYLDYSRNDGEWIPNWEGGNHNHGAIALLKWMNEEVYSHYPNAMTIAEESTAFPGVSAPTFAGGLGFGFKWNMGWMHDSLNYIREDPIHRKYHHDTITFPLVYAFSENFILSLSHDEVVYGKGSILDKMPGDEWQKTANLRAYMGYMYGQPGKKLNFMGAEIAQSAEWDHDGQLQWFLTQFERHSGMQSLVRDLNKLYTTEPALYQKDCEPAGFEWRLQDEAEMSVLAHERLGDNGERILVVSNFTPAPREDFRLGMPVAGQYELILNSDAHFYGGSDYSVISEASTEKVESQGLAQSIVITLPPLSTVFYRLK.

The active-site Nucleophile is D396. Catalysis depends on E449, which acts as the Proton donor.

It belongs to the glycosyl hydrolase 13 family. GlgB subfamily. In terms of assembly, monomer.

It carries out the reaction Transfers a segment of a (1-&gt;4)-alpha-D-glucan chain to a primary hydroxy group in a similar glucan chain.. Its pathway is glycan biosynthesis; glycogen biosynthesis. Functionally, catalyzes the formation of the alpha-1,6-glucosidic linkages in glycogen by scission of a 1,4-alpha-linked oligosaccharide from growing alpha-1,4-glucan chains and the subsequent attachment of the oligosaccharide to the alpha-1,6 position. The chain is 1,4-alpha-glucan branching enzyme GlgB from Aliivibrio fischeri (strain ATCC 700601 / ES114) (Vibrio fischeri).